The following is a 306-amino-acid chain: Ornithine carbamoyltransferase (306 aa).

Residues 53 to 56 (STRT), Gln80, Arg104, and 131 to 134 (HPCQ) contribute to the carbamoyl phosphate site. Residues Asn162, Asp219, and 223–224 (SM) each bind L-ornithine. Residues 259 to 260 (CL) and Arg287 each bind carbamoyl phosphate.

It belongs to the aspartate/ornithine carbamoyltransferase superfamily. OTCase family.

Its subcellular location is the cytoplasm. It catalyses the reaction carbamoyl phosphate + L-ornithine = L-citrulline + phosphate + H(+). Its pathway is amino-acid degradation; L-arginine degradation via ADI pathway; carbamoyl phosphate from L-arginine: step 2/2. Its function is as follows. Reversibly catalyzes the transfer of the carbamoyl group from carbamoyl phosphate (CP) to the N(epsilon) atom of ornithine (ORN) to produce L-citrulline. The protein is Ornithine carbamoyltransferase of Acinetobacter baumannii (strain AYE).